Reading from the N-terminus, the 318-residue chain is L-lactate dehydrogenase 1 (318 aa).

Residues Val-17, Asp-38, Lys-43, Tyr-69, and 83 to 84 each bind NAD(+); that span reads GA. Substrate contacts are provided by residues Gln-86, Arg-92, and 124–127; that span reads NPVD. NAD(+)-binding positions include 122-124 and Ser-147; that span reads ATN. 152–155 lines the substrate pocket; sequence DTGR. Beta-D-fructose 1,6-bisphosphate-binding residues include Arg-157 and His-172. His-179 (proton acceptor) is an active-site residue. Tyr-224 is subject to Phosphotyrosine. Thr-233 is a binding site for substrate.

Belongs to the LDH/MDH superfamily. LDH family. In terms of assembly, homotetramer.

The protein resides in the cytoplasm. The enzyme catalyses (S)-lactate + NAD(+) = pyruvate + NADH + H(+). Its pathway is fermentation; pyruvate fermentation to lactate; (S)-lactate from pyruvate: step 1/1. Allosterically activated by fructose 1,6-bisphosphate (FBP). Catalyzes the conversion of lactate to pyruvate. This chain is L-lactate dehydrogenase 1, found in Peribacillus psychrosaccharolyticus (Bacillus psychrosaccharolyticus).